The following is a 63-amino-acid chain: Hypoxia-inducible lipid droplet-associated protein (63 aa).

Residues 1 to 37 (MKHVLNLYLLGVVLTLLSIFVRVMESLEGLLESPSPG) form a required for targeting to lipid droplets region. The chain crosses the membrane as a helical span at residues 7–23 (LYLLGVVLTLLSIFVRV). The interval 31-63 (LESPSPGTSWTTRSQLANTEPTKGLPDHPSRSM) is disordered. The segment covering 35-51 (SPGTSWTTRSQLANTEP) has biased composition (polar residues). S44 is subject to Phosphoserine.

As to expression, highly expressed in renal cell carcinoma cells but barely detectable in adjacent normal kidney tissue. Detected in some cervical and endometrial cancers. Expression also detected in fetal kidney with little or no expression observed in normal adult heart, liver, lung, pancreas, prostate or spinal cord (at protein level).

It localises to the lipid droplet. It is found in the secreted. The protein resides in the membrane. Functionally, increases intracellular lipid accumulation. Stimulates expression of cytokines including IL6, MIF and VEGFA. Enhances cell growth and proliferation. This Homo sapiens (Human) protein is Hypoxia-inducible lipid droplet-associated protein (HILPDA).